Reading from the N-terminus, the 268-residue chain is Tetraspanin-5 (268 aa).

Residues 1–17 lie on the Cytoplasmic side of the membrane; it reads MSGKHYKGPEVSCCIKY. The helical transmembrane segment at 18–38 threads the bilayer; the sequence is FIFGFNVIFWFLGIAFLGIGL. Residues 39–61 are Extracellular-facing; it reads WAWNEKGVLSNISSITDLGGFDP. The N-linked (GlcNAc...) asparagine glycan is linked to Asn-49. Residues 62-82 traverse the membrane as a helical segment; it reads VWLFLVVGGVMFILGFAGCIG. Residues 83 to 92 are Cytoplasmic-facing; sequence ALRENTFLLK. A helical membrane pass occupies residues 93–113; the sequence is FFSVFLGIIFFLELTAGVLAF. Residues 114-232 lie on the Extracellular side of the membrane; it reads VFKDWIKDQL…PQFEKWLQDN (119 aa). 4 disulfide bridges follow: Cys-153/Cys-221, Cys-154/Cys-186, Cys-170/Cys-180, and Cys-187/Cys-200. Residues Asn-169 and Asn-174 are each glycosylated (N-linked (GlcNAc...) asparagine). N-linked (GlcNAc...) asparagine glycosylation is present at Asn-232. The chain crosses the membrane as a helical span at residues 233-253; that stretch reads LTIVAGIFIGIALLQIFGICL. Over 254 to 268 the chain is Cytoplasmic; sequence AQNLVSDIEAVRASW.

The protein belongs to the tetraspanin (TM4SF) family. Interacts with ADAM10; the interaction influences ADAM10 substrate specificity, endocytosis and turnover. In terms of processing, palmitoylated.

It is found in the cell membrane. Its function is as follows. Part of TspanC8 subgroup, composed of 6 members that interact with the transmembrane metalloprotease ADAM10. This interaction is required for ADAM10 exit from the endoplasmic reticulum and for enzymatic maturation and trafficking to the cell surface as well as substrate specificity. Different TspanC8/ADAM10 complexes have distinct substrates. Promotes ADAM10-mediated cleavage of CD44. Seems to regulate VE-cadherin expression in endothelial cells probably through interaction with ADAM10, promoting leukocyte transmigration. The chain is Tetraspanin-5 (TSPAN5) from Bos taurus (Bovine).